We begin with the raw amino-acid sequence, 150 residues long: Deoxyuridine 5'-triphosphate nucleotidohydrolase (150 aa).

Substrate contacts are provided by residues 69-71, Asn-82, 86-88, and Lys-96; these read RSG and LID.

It belongs to the dUTPase family. Mg(2+) serves as cofactor.

The enzyme catalyses dUTP + H2O = dUMP + diphosphate + H(+). It functions in the pathway pyrimidine metabolism; dUMP biosynthesis; dUMP from dCTP (dUTP route): step 2/2. This enzyme is involved in nucleotide metabolism: it produces dUMP, the immediate precursor of thymidine nucleotides and it decreases the intracellular concentration of dUTP so that uracil cannot be incorporated into DNA. This Neisseria gonorrhoeae (strain NCCP11945) protein is Deoxyuridine 5'-triphosphate nucleotidohydrolase.